A 366-amino-acid polypeptide reads, in one-letter code: Chitoporin (366 aa).

A signal peptide spans 1 to 23 (MDKMFKRTVIGAAVALASTGLMA).

The protein belongs to the Gram-negative porin family.

The protein localises to the cell outer membrane. Involved in the uptake of chitosugars. The protein is Chitoporin (chiP) of Vibrio furnissii.